The chain runs to 163 residues: Protein-export protein SecB (163 aa).

This sequence belongs to the SecB family. Homotetramer, a dimer of dimers. One homotetramer interacts with 1 SecA dimer.

It is found in the cytoplasm. One of the proteins required for the normal export of preproteins out of the cell cytoplasm. It is a molecular chaperone that binds to a subset of precursor proteins, maintaining them in a translocation-competent state. It also specifically binds to its receptor SecA. The protein is Protein-export protein SecB of Shewanella woodyi (strain ATCC 51908 / MS32).